We begin with the raw amino-acid sequence, 481 residues long: tRNA-2-methylthio-N(6)-dimethylallyladenosine synthase (481 aa).

The MTTase N-terminal domain maps to 24–140 (KKLFIESYGC…LPNLLAEVEE (117 aa)). Residues Cys-33, Cys-69, Cys-103, Cys-178, Cys-182, and Cys-185 each contribute to the [4Fe-4S] cluster site. The Radical SAM core domain occupies 164 to 411 (MSNGITALVS…DLQQKHAWFR (248 aa)). One can recognise a TRAM domain in the interval 413-476 (EEFVGKTVEV…SGTLKGEAVG (64 aa)).

It belongs to the methylthiotransferase family. MiaB subfamily. In terms of assembly, monomer. [4Fe-4S] cluster serves as cofactor.

The protein localises to the cytoplasm. It catalyses the reaction N(6)-dimethylallyladenosine(37) in tRNA + (sulfur carrier)-SH + AH2 + 2 S-adenosyl-L-methionine = 2-methylsulfanyl-N(6)-dimethylallyladenosine(37) in tRNA + (sulfur carrier)-H + 5'-deoxyadenosine + L-methionine + A + S-adenosyl-L-homocysteine + 2 H(+). Functionally, catalyzes the methylthiolation of N6-(dimethylallyl)adenosine (i(6)A), leading to the formation of 2-methylthio-N6-(dimethylallyl)adenosine (ms(2)i(6)A) at position 37 in tRNAs that read codons beginning with uridine. The sequence is that of tRNA-2-methylthio-N(6)-dimethylallyladenosine synthase from Flavobacterium johnsoniae (strain ATCC 17061 / DSM 2064 / JCM 8514 / BCRC 14874 / CCUG 350202 / NBRC 14942 / NCIMB 11054 / UW101) (Cytophaga johnsonae).